A 131-amino-acid chain; its full sequence is Large ribosomal subunit protein bL12 (131 aa).

Basic and acidic residues predominate over residues 100–125; that stretch reads STPKPIKEGISKEDAEAAKKQLEDAG. Residues 100 to 131 are disordered; the sequence is STPKPIKEGISKEDAEAAKKQLEDAGGKVSIK.

The protein belongs to the bacterial ribosomal protein bL12 family. In terms of assembly, homodimer. Part of the ribosomal stalk of the 50S ribosomal subunit. Forms a multimeric L10(L12)X complex, where L10 forms an elongated spine to which 2 to 4 L12 dimers bind in a sequential fashion. Binds GTP-bound translation factors.

Forms part of the ribosomal stalk which helps the ribosome interact with GTP-bound translation factors. Is thus essential for accurate translation. In Cyanothece sp. (strain PCC 7425 / ATCC 29141), this protein is Large ribosomal subunit protein bL12.